The following is a 633-amino-acid chain: Pesticidal crystal protein Cry2Ab (633 aa).

Belongs to the delta endotoxin family.

Functionally, promotes colloidosmotic lysis by binding to the midgut epithelial cells of lepidopteran (Manduca sexta) larvae. The polypeptide is Pesticidal crystal protein Cry2Ab (cry2Ab) (Bacillus thuringiensis subsp. kurstaki).